The chain runs to 633 residues: DNA repair protein XRCC1 (633 aa).

Ser140 carries the phosphoserine modification. A Glycyl lysine isopeptide (Lys-Gly) (interchain with G-Cter in SUMO1); alternate cross-link involves residue Lys176. Lys176 participates in a covalent cross-link: Glycyl lysine isopeptide (Lys-Gly) (interchain with G-Cter in SUMO2); alternate. Thr198 is modified (phosphothreonine). Position 199 is a phosphoserine (Ser199). Phosphothreonine is present on Thr202. A phosphoserine mark is found at Ser204, Ser226, and Ser241. Low complexity predominate over residues 221–231 (AASSASPVSRA). The disordered stretch occupies residues 221 to 313 (AASSASPVSR…TEPRRPRAGP (93 aa)). The span at 240–257 (ESPKGKRKLDLNQEEKKT) shows a compositional bias: basic and acidic residues. Residue Thr257 is modified to Phosphothreonine. Phosphoserine is present on residues Ser259 and Ser266. A compositionally biased stretch (low complexity) spans 277-291 (APTRTPATAPVPARA). Residue Thr281 is modified to Phosphothreonine. Basic and acidic residues predominate over residues 299 to 313 (PRGEGTEPRRPRAGP). In terms of domain architecture, BRCT 1 spans 315–403 (ELGKILQGVV…RRLPSQRYLM (89 aa)). Position 371 is a phosphoserine; by PRKDC (Ser371). Disordered stretches follow at residues 400–462 (RYLM…AASP), 471–490 (EGVQ…DTED), and 498–536 (QKEH…DLPV). 4 positions are modified to phosphoserine: Ser408, Ser409, Ser410, and Ser421. The span at 427–443 (KLPQKQPQTKTKPTQAA) shows a compositional bias: low complexity. Residues Ser446 and Ser447 each carry the phosphoserine modification. Thr453 and Thr457 each carry phosphothreonine. A phosphoserine mark is found at Ser461 and Ser485. The segment covering 481 to 490 (GAEDSGDTED) has biased composition (acidic residues). Residue Thr488 is modified to Phosphothreonine. Phosphoserine is present on Ser518. 2 positions are modified to phosphothreonine: Thr519 and Thr523. A BRCT 2 domain is found at 538-629 (ELPDFFQGKH…KLLPHQLYGV (92 aa)).

Homodimer. Interacts with polynucleotide kinase (PNK), DNA polymerase-beta (POLB) and DNA ligase III (LIG3). Interacts with APTX and APLF. Interacts with APEX1; the interaction is induced by SIRT1 and increases with the acetylated form of APEX1. Interacts with (poly-ADP-ribosylated) PARP1. In terms of processing, phosphorylation of Ser-371 causes dimer dissociation. Phosphorylation by CK2 promotes interaction with APTX and APLF. Sumoylated. Expressed in fibroblasts, retinal pigmented epithelial cells and lymphoblastoid cells (at protein level).

It localises to the nucleus. It is found in the chromosome. Functionally, scaffold protein involved in DNA single-strand break repair by mediating the assembly of DNA break repair protein complexes. Negatively regulates ADP-ribosyltransferase activity of PARP1 during base-excision repair in order to prevent excessive PARP1 activity. Recognizes and binds poly-ADP-ribose chains: specifically binds auto-poly-ADP-ribosylated PARP1, limiting its activity. The polypeptide is DNA repair protein XRCC1 (Homo sapiens (Human)).